Here is a 331-residue protein sequence, read N- to C-terminus: Adenosine deaminase (331 aa).

The Zn(2+) site is built by His-12 and His-14. Positions 14, 16, and 170 each coordinate substrate. His-197 is a binding site for Zn(2+). Glu-200 acts as the Proton donor in catalysis. Asp-278 provides a ligand contact to Zn(2+).

The protein belongs to the metallo-dependent hydrolases superfamily. Adenosine and AMP deaminases family. Adenosine deaminase subfamily. It depends on Zn(2+) as a cofactor.

The enzyme catalyses adenosine + H2O + H(+) = inosine + NH4(+). It carries out the reaction 2'-deoxyadenosine + H2O + H(+) = 2'-deoxyinosine + NH4(+). Functionally, catalyzes the hydrolytic deamination of adenosine and 2-deoxyadenosine. The sequence is that of Adenosine deaminase from Clostridium botulinum (strain 657 / Type Ba4).